Consider the following 357-residue polypeptide: Tetraacyldisaccharide 4'-kinase (357 aa).

67-74 (SVGGTGKT) contacts ATP.

Belongs to the LpxK family.

The catalysed reaction is a lipid A disaccharide + ATP = a lipid IVA + ADP + H(+). It functions in the pathway glycolipid biosynthesis; lipid IV(A) biosynthesis; lipid IV(A) from (3R)-3-hydroxytetradecanoyl-[acyl-carrier-protein] and UDP-N-acetyl-alpha-D-glucosamine: step 6/6. Transfers the gamma-phosphate of ATP to the 4'-position of a tetraacyldisaccharide 1-phosphate intermediate (termed DS-1-P) to form tetraacyldisaccharide 1,4'-bis-phosphate (lipid IVA). In Syntrophotalea carbinolica (strain DSM 2380 / NBRC 103641 / GraBd1) (Pelobacter carbinolicus), this protein is Tetraacyldisaccharide 4'-kinase.